The chain runs to 61 residues: Small ribosomal subunit protein uS14 (61 aa).

Zn(2+) is bound by residues C24, C27, C40, and C43.

It belongs to the universal ribosomal protein uS14 family. Zinc-binding uS14 subfamily. As to quaternary structure, part of the 30S ribosomal subunit. Contacts proteins S3 and S10. Zn(2+) is required as a cofactor.

In terms of biological role, binds 16S rRNA, required for the assembly of 30S particles and may also be responsible for determining the conformation of the 16S rRNA at the A site. The sequence is that of Small ribosomal subunit protein uS14 from Mycoplasmoides gallisepticum (strain R(low / passage 15 / clone 2)) (Mycoplasma gallisepticum).